A 229-amino-acid chain; its full sequence is 2-C-methyl-D-erythritol 4-phosphate cytidylyltransferase (229 aa).

It belongs to the IspD/TarI cytidylyltransferase family. IspD subfamily.

The catalysed reaction is 2-C-methyl-D-erythritol 4-phosphate + CTP + H(+) = 4-CDP-2-C-methyl-D-erythritol + diphosphate. Its pathway is isoprenoid biosynthesis; isopentenyl diphosphate biosynthesis via DXP pathway; isopentenyl diphosphate from 1-deoxy-D-xylulose 5-phosphate: step 2/6. Its function is as follows. Catalyzes the formation of 4-diphosphocytidyl-2-C-methyl-D-erythritol from CTP and 2-C-methyl-D-erythritol 4-phosphate (MEP). The protein is 2-C-methyl-D-erythritol 4-phosphate cytidylyltransferase of Neisseria meningitidis serogroup C / serotype 2a (strain ATCC 700532 / DSM 15464 / FAM18).